A 427-amino-acid polypeptide reads, in one-letter code: NADH-quinone oxidoreductase subunit 14 (427 aa).

14 helical membrane-spanning segments follow: residues 1–21, 30–50, 57–77, 79–99, 104–124, 137–157, 172–192, 204–224, 230–250, 257–277, 280–300, 322–342, 360–380, and 400–420; these read MTLAILAVFSVALTLLGFVLP, LLGLALALASLLLTWGKPFAF, GVSQVFTLLALLGALWTVGLV, SGRFEFYLLVLYAALGMHLLA, LLLMLVALEALSLPLYALATW, FLLGALAAAFFLYGAALFYGA, YALALGLLLVGLGFKAALAPF, PTPVVLFMATSVKAAAFAALL, PEALALLVALSVVVGNLAALA, LLAYSSIAHAGYMALALYTGN, ALGFYLLTYVLATGLAFAVLS, LGLAFLVAMLSLLGLPPLAGF, VLVLALVTSAVSAYYYLGLGL, and AAVVAAGVLLLALGLLPGLVL.

Belongs to the complex I subunit 2 family. In terms of assembly, NDH-1 is composed of 15 different subunits, Nqo1 to Nqo15. The complex has a L-shaped structure, with the hydrophobic arm (subunits Nqo7, Nqo8 and Nqo10 to Nqo14) embedded in the membrane and the hydrophilic peripheral arm (subunits Nqo1 to Nqo6, Nqo9 and Nqo15) protruding into the bacterial cytoplasm. The hydrophilic domain contains all the redox centers.

It localises to the cell inner membrane. The enzyme catalyses a quinone + NADH + 5 H(+)(in) = a quinol + NAD(+) + 4 H(+)(out). In terms of biological role, NDH-1 shuttles electrons from NADH, via FMN and iron-sulfur (Fe-S) centers, to quinones in the respiratory chain. The immediate electron acceptor for the enzyme in this species is menaquinone. Couples the redox reaction to proton translocation (for every two electrons transferred, four hydrogen ions are translocated across the cytoplasmic membrane), and thus conserves the redox energy in a proton gradient required for the synthesis of ATP. This Thermus thermophilus (strain ATCC 27634 / DSM 579 / HB8) protein is NADH-quinone oxidoreductase subunit 14 (nqo14).